Here is a 255-residue protein sequence, read N- to C-terminus: tRNA (guanine-N(7)-)-methyltransferase (255 aa).

Positions 1–31 (MMHDDPNEAGLPPHNDAIPDETAEGADEVNP) are disordered. Acidic residues predominate over residues 18–27 (IPDETAEGAD). S-adenosyl-L-methionine contacts are provided by E86, E111, D138, and D161. D161 is a catalytic residue. Substrate-binding positions include K165, D197, and 232 to 235 (TKFE).

This sequence belongs to the class I-like SAM-binding methyltransferase superfamily. TrmB family.

The enzyme catalyses guanosine(46) in tRNA + S-adenosyl-L-methionine = N(7)-methylguanosine(46) in tRNA + S-adenosyl-L-homocysteine. The protein operates within tRNA modification; N(7)-methylguanine-tRNA biosynthesis. Catalyzes the formation of N(7)-methylguanine at position 46 (m7G46) in tRNA. This is tRNA (guanine-N(7)-)-methyltransferase from Burkholderia cenocepacia (strain HI2424).